We begin with the raw amino-acid sequence, 432 residues long: Enolase (432 aa).

Q163 contacts (2R)-2-phosphoglycerate. E205 serves as the catalytic Proton donor. Residues D242, E288, and D315 each coordinate Mg(2+). (2R)-2-phosphoglycerate contacts are provided by K340, R369, S370, and K391. Catalysis depends on K340, which acts as the Proton acceptor.

Belongs to the enolase family. As to quaternary structure, homodimer. Mg(2+) is required as a cofactor.

It localises to the cytoplasm. The protein localises to the secreted. It is found in the cell surface. The catalysed reaction is (2R)-2-phosphoglycerate = phosphoenolpyruvate + H2O. It functions in the pathway carbohydrate degradation; glycolysis; pyruvate from D-glyceraldehyde 3-phosphate: step 4/5. The covalent binding to the substrate causes inactivation of the enzyme, and possibly serves as a signal for the export of the protein. In terms of biological role, catalyzes the reversible conversion of 2-phosphoglycerate (2-PG) into phosphoenolpyruvate (PEP). It is essential for the degradation of carbohydrates via glycolysis. The chain is Enolase from Enterococcus hirae.